Here is a 203-residue protein sequence, read N- to C-terminus: VEL1-related protein SPBPB2B2.15 (203 aa).

Positions 1 to 16 (MFKNLIFLFFIGLATA) are cleaved as a signal peptide.

The protein belongs to the VEL1 family.

The protein localises to the cytoplasm. It localises to the cytosol. In Schizosaccharomyces pombe (strain 972 / ATCC 24843) (Fission yeast), this protein is VEL1-related protein SPBPB2B2.15.